The primary structure comprises 201 residues: Holliday junction branch migration complex subunit RuvA (201 aa).

A domain I region spans residues 1-63; the sequence is MIAYIKGTLN…EDAQILFGFQ (63 aa). Residues 64–142 form a domain II region; it reads NRDEKYLFTK…SVFSITDEQQ (79 aa). Residues 143–149 form a flexible linker region; that stretch reads KSSVSNV. The tract at residues 150–201 is domain III; it reads NNNEVYSEAMEALKALGYTDKEVKQVLPHLKKDNDALSVDEAIRKALALLAK.

It belongs to the RuvA family. As to quaternary structure, homotetramer. Forms an RuvA(8)-RuvB(12)-Holliday junction (HJ) complex. HJ DNA is sandwiched between 2 RuvA tetramers; dsDNA enters through RuvA and exits via RuvB. An RuvB hexamer assembles on each DNA strand where it exits the tetramer. Each RuvB hexamer is contacted by two RuvA subunits (via domain III) on 2 adjacent RuvB subunits; this complex drives branch migration. In the full resolvosome a probable DNA-RuvA(4)-RuvB(12)-RuvC(2) complex forms which resolves the HJ.

It is found in the cytoplasm. In terms of biological role, the RuvA-RuvB-RuvC complex processes Holliday junction (HJ) DNA during genetic recombination and DNA repair, while the RuvA-RuvB complex plays an important role in the rescue of blocked DNA replication forks via replication fork reversal (RFR). RuvA specifically binds to HJ cruciform DNA, conferring on it an open structure. The RuvB hexamer acts as an ATP-dependent pump, pulling dsDNA into and through the RuvAB complex. HJ branch migration allows RuvC to scan DNA until it finds its consensus sequence, where it cleaves and resolves the cruciform DNA. The polypeptide is Holliday junction branch migration complex subunit RuvA (Oceanobacillus iheyensis (strain DSM 14371 / CIP 107618 / JCM 11309 / KCTC 3954 / HTE831)).